The chain runs to 185 residues: Ribosome-recycling factor (185 aa).

The interval 145–164 (DGEAGEDEVSRAEKDLDKTT) is disordered.

It belongs to the RRF family.

It is found in the cytoplasm. In terms of biological role, responsible for the release of ribosomes from messenger RNA at the termination of protein biosynthesis. May increase the efficiency of translation by recycling ribosomes from one round of translation to another. The protein is Ribosome-recycling factor of Mycobacterium sp. (strain JLS).